The following is a 928-amino-acid chain: Isoleucine--tRNA ligase (928 aa).

The 'HIGH' region signature appears at 57-67 (PFANGNIHMGH). Residue Glu-552 participates in L-isoleucyl-5'-AMP binding. A 'KMSKS' region motif is present at residues 593-597 (KMSKS). Lys-596 serves as a coordination point for ATP. Residues Cys-887, Cys-890, Cys-907, and Cys-910 each contribute to the Zn(2+) site.

This sequence belongs to the class-I aminoacyl-tRNA synthetase family. IleS type 1 subfamily. As to quaternary structure, monomer. Requires Zn(2+) as cofactor.

The protein resides in the cytoplasm. The catalysed reaction is tRNA(Ile) + L-isoleucine + ATP = L-isoleucyl-tRNA(Ile) + AMP + diphosphate. Functionally, catalyzes the attachment of isoleucine to tRNA(Ile). As IleRS can inadvertently accommodate and process structurally similar amino acids such as valine, to avoid such errors it has two additional distinct tRNA(Ile)-dependent editing activities. One activity is designated as 'pretransfer' editing and involves the hydrolysis of activated Val-AMP. The other activity is designated 'posttransfer' editing and involves deacylation of mischarged Val-tRNA(Ile). The protein is Isoleucine--tRNA ligase of Lacticaseibacillus paracasei (strain ATCC 334 / BCRC 17002 / CCUG 31169 / CIP 107868 / KCTC 3260 / NRRL B-441) (Lactobacillus paracasei).